The chain runs to 2604 residues: Probable polyketide synthase 17 (2604 aa).

In terms of domain architecture, Ketosynthase family 3 (KS3) spans 11–433 (NDDIAIIGMG…GSNCHMILSE (423 aa)). Residues C179, H316, and H356 each act as for beta-ketoacyl synthase activity in the active site. The segment at 631–664 (GISPSIVVGHSFGEIPSALFSDVISLETAVKIVY) is acyl/malonyl transferases. The active-site For acyl/malonyl transferase activity is the S641. The interval 937–1057 (NNLLGHDQFA…GRIGLFKHNP (121 aa)) is N-terminal hotdog fold. A PKS/mFAS DH domain is found at 937 to 1216 (NNLLGHDQFA…CTSLIRLKKQ (280 aa)). The active-site Proton acceptor; for dehydratase activity is the H968. Positions 1072–1216 (SFTTLTKSEV…CTSLIRLKKQ (145 aa)) are C-terminal hotdog fold. D1132 serves as the catalytic Proton donor; for dehydratase activity. A disordered region spans residues 1357–1407 (GESEHFSPSNPSSPNDTPRNNSNNCSSKNNAASSDDADDDTNNEETINQLN). Residues 1363-1390 (SPSNPSSPNDTPRNNSNNCSSKNNAASS) show a composition bias toward low complexity. One can recognise a Carrier domain in the interval 2507–2584 (GDSGSTQAKV…SIIQRISSKS (78 aa)). An O-(pantetheine 4'-phosphoryl)serine modification is found at S2544. Over residues 2581-2597 (SSKSTSTSTPNPTNTSK) the composition is skewed to low complexity. Residues 2581–2604 (SSKSTSTSTPNPTNTSKQTATKKT) are disordered.

The cofactor is pantetheine 4'-phosphate.

In terms of biological role, probable polyketide synthase. The chain is Probable polyketide synthase 17 (pks17) from Dictyostelium discoideum (Social amoeba).